We begin with the raw amino-acid sequence, 255 residues long: Ribosomal RNA small subunit methyltransferase A (255 aa).

Residues Asn12, Leu14, Gly39, Glu60, Asp84, and Asn106 each contribute to the S-adenosyl-L-methionine site.

This sequence belongs to the class I-like SAM-binding methyltransferase superfamily. rRNA adenine N(6)-methyltransferase family. RsmA subfamily.

It is found in the cytoplasm. The catalysed reaction is adenosine(1518)/adenosine(1519) in 16S rRNA + 4 S-adenosyl-L-methionine = N(6)-dimethyladenosine(1518)/N(6)-dimethyladenosine(1519) in 16S rRNA + 4 S-adenosyl-L-homocysteine + 4 H(+). Its function is as follows. Specifically dimethylates two adjacent adenosines (A1518 and A1519) in the loop of a conserved hairpin near the 3'-end of 16S rRNA in the 30S particle. May play a critical role in biogenesis of 30S subunits. The protein is Ribosomal RNA small subunit methyltransferase A of Janthinobacterium sp. (strain Marseille) (Minibacterium massiliensis).